The sequence spans 419 residues: uncharacterized protein (419 aa).

Transmembrane regions (helical) follow at residues 5-25 (MIIVFCALMMLAVPVGYALII), 26-46 (AAGVAVLFNGYLPLSIVAQQI), 53-73 (FPMLALPFFMLAGTLMLGGEL), 102-122 (VFGGVSGSAVANASALGSVLI), 144-164 (VIDVLIPPSIPMILFSLVSGV), 170-190 (FVAGILPGILMAASFVFVCWF), 210-230 (ATLALKSLPAVLLPVLIILFL), 234-254 (LATPTEVAVLSVVYSLALSLL), 274-294 (ATGVVMLVIMGSAAVGWVLTF), 309-329 (ISSPIVIILMMNILMLIVGMP), 332-352 (MPPAILLLGPIFVPLADTIGL), 360-380 (MMVINLGIGLYTPPIGTTLFI), and 396-416 (LWPFFAMAMTLLLAVSFIPAL).

Belongs to the YiaN/YgiK family.

The protein localises to the cell inner membrane. This is an uncharacterized protein from Sinorhizobium fredii (strain NBRC 101917 / NGR234).